Here is an 83-residue protein sequence, read N- to C-terminus: Cytochrome b559 subunit alpha (83 aa).

The helical transmembrane segment at 21 to 35 threads the bilayer; that stretch reads VIHSITIPSLFIAGW. Position 23 (His23) interacts with heme.

The protein belongs to the PsbE/PsbF family. As to quaternary structure, heterodimer of an alpha subunit and a beta subunit. PSII is composed of 1 copy each of membrane proteins PsbA, PsbB, PsbC, PsbD, PsbE, PsbF, PsbH, PsbI, PsbJ, PsbK, PsbL, PsbM, PsbT, PsbX, PsbY, PsbZ, Psb30/Ycf12, at least 3 peripheral proteins of the oxygen-evolving complex and a large number of cofactors. It forms dimeric complexes. Heme b serves as cofactor.

The protein localises to the plastid. It localises to the chloroplast thylakoid membrane. This b-type cytochrome is tightly associated with the reaction center of photosystem II (PSII). PSII is a light-driven water:plastoquinone oxidoreductase that uses light energy to abstract electrons from H(2)O, generating O(2) and a proton gradient subsequently used for ATP formation. It consists of a core antenna complex that captures photons, and an electron transfer chain that converts photonic excitation into a charge separation. The polypeptide is Cytochrome b559 subunit alpha (Pinus koraiensis (Korean pine)).